The primary structure comprises 128 residues: Putative histidinol dehydrogenase (128 aa).

Positions 21 to 84 (QRPDIAPRHH…EGQEKASGRR (64 aa)) are disordered. 2 stretches are compositionally biased toward basic and acidic residues: residues 34–50 (HRAE…RRTA) and 72–81 (QGREGQEKAS).

This sequence belongs to the histidinol dehydrogenase family.

The catalysed reaction is L-histidinol + 2 NAD(+) + H2O = L-histidine + 2 NADH + 3 H(+). It participates in amino-acid biosynthesis; L-histidine biosynthesis; L-histidine from 5-phospho-alpha-D-ribose 1-diphosphate: step 9/9. Functionally, catalyzes the sequential NAD-dependent oxidations of L-histidinol to L-histidinaldehyde and then to L-histidine. The chain is Putative histidinol dehydrogenase (hisD) from Azospirillum brasilense.